A 188-amino-acid polypeptide reads, in one-letter code: Elongation factor P (188 aa).

It belongs to the elongation factor P family.

The protein localises to the cytoplasm. The protein operates within protein biosynthesis; polypeptide chain elongation. In terms of biological role, involved in peptide bond synthesis. Stimulates efficient translation and peptide-bond synthesis on native or reconstituted 70S ribosomes in vitro. Probably functions indirectly by altering the affinity of the ribosome for aminoacyl-tRNA, thus increasing their reactivity as acceptors for peptidyl transferase. In Bacteroides thetaiotaomicron (strain ATCC 29148 / DSM 2079 / JCM 5827 / CCUG 10774 / NCTC 10582 / VPI-5482 / E50), this protein is Elongation factor P.